We begin with the raw amino-acid sequence, 301 residues long: Probable alpha-L-glutamate ligase (301 aa).

Residues Leu104–Glu287 form the ATP-grasp domain. ATP is bound by residues Lys141, Glu178–Phe179, Asp187, and Arg211–Asn213. Asp248, Glu260, and Asn262 together coordinate Mg(2+). The Mn(2+) site is built by Asp248, Glu260, and Asn262.

This sequence belongs to the RimK family. Mg(2+) is required as a cofactor. The cofactor is Mn(2+).

The protein is Probable alpha-L-glutamate ligase of Cellvibrio japonicus (strain Ueda107) (Pseudomonas fluorescens subsp. cellulosa).